The primary structure comprises 326 residues: Aspartate carbamoyltransferase catalytic subunit (326 aa).

Positions 60 and 61 each coordinate carbamoyl phosphate. Lys-88 is an L-aspartate binding site. 3 residues coordinate carbamoyl phosphate: Arg-110, His-143, and Gln-146. Positions 183 and 239 each coordinate L-aspartate. The carbamoyl phosphate site is built by Gly-280 and Pro-281.

This sequence belongs to the aspartate/ornithine carbamoyltransferase superfamily. ATCase family. Heterododecamer (2C3:3R2) of six catalytic PyrB chains organized as two trimers (C3), and six regulatory PyrI chains organized as three dimers (R2).

It carries out the reaction carbamoyl phosphate + L-aspartate = N-carbamoyl-L-aspartate + phosphate + H(+). It functions in the pathway pyrimidine metabolism; UMP biosynthesis via de novo pathway; (S)-dihydroorotate from bicarbonate: step 2/3. Functionally, catalyzes the condensation of carbamoyl phosphate and aspartate to form carbamoyl aspartate and inorganic phosphate, the committed step in the de novo pyrimidine nucleotide biosynthesis pathway. The chain is Aspartate carbamoyltransferase catalytic subunit from Microcystis aeruginosa (strain NIES-843 / IAM M-2473).